The sequence spans 234 residues: Zein-alpha GZ19AB11 (234 aa).

The first 21 residues, 1-21 (MAAKIFCLLMLLGLSASAATA), serve as a signal peptide directing secretion.

Belongs to the zein family.

Its function is as follows. Zeins are major seed storage proteins. The sequence is that of Zein-alpha GZ19AB11 from Zea mays (Maize).